A 364-amino-acid polypeptide reads, in one-letter code: UDP-3-O-acylglucosamine N-acyltransferase (364 aa).

The Proton acceptor role is filled by histidine 267.

Belongs to the transferase hexapeptide repeat family. LpxD subfamily. In terms of assembly, homotrimer.

It catalyses the reaction a UDP-3-O-[(3R)-3-hydroxyacyl]-alpha-D-glucosamine + a (3R)-hydroxyacyl-[ACP] = a UDP-2-N,3-O-bis[(3R)-3-hydroxyacyl]-alpha-D-glucosamine + holo-[ACP] + H(+). The protein operates within bacterial outer membrane biogenesis; LPS lipid A biosynthesis. Catalyzes the N-acylation of UDP-3-O-acylglucosamine using 3-hydroxyacyl-ACP as the acyl donor. Is involved in the biosynthesis of lipid A, a phosphorylated glycolipid that anchors the lipopolysaccharide to the outer membrane of the cell. The polypeptide is UDP-3-O-acylglucosamine N-acyltransferase (Bordetella petrii (strain ATCC BAA-461 / DSM 12804 / CCUG 43448)).